The chain runs to 316 residues: tRNA-cytidine(32) 2-sulfurtransferase (316 aa).

Residues 52–57 (SGGKDS) carry the PP-loop motif motif. [4Fe-4S] cluster contacts are provided by C127, C130, and C218.

The protein belongs to the TtcA family. In terms of assembly, homodimer. Mg(2+) is required as a cofactor. [4Fe-4S] cluster serves as cofactor.

The protein localises to the cytoplasm. It catalyses the reaction cytidine(32) in tRNA + S-sulfanyl-L-cysteinyl-[cysteine desulfurase] + AH2 + ATP = 2-thiocytidine(32) in tRNA + L-cysteinyl-[cysteine desulfurase] + A + AMP + diphosphate + H(+). It functions in the pathway tRNA modification. Its function is as follows. Catalyzes the ATP-dependent 2-thiolation of cytidine in position 32 of tRNA, to form 2-thiocytidine (s(2)C32). The sulfur atoms are provided by the cysteine/cysteine desulfurase (IscS) system. This is tRNA-cytidine(32) 2-sulfurtransferase from Haemophilus ducreyi (strain 35000HP / ATCC 700724).